A 507-amino-acid chain; its full sequence is Pyridoxine 4-oxidase (507 aa).

His-448 acts as the Proton acceptor in catalysis.

Belongs to the GMC oxidoreductase family. As to quaternary structure, monomer. The cofactor is FAD.

It catalyses the reaction pyridoxine + O2 = pyridoxal + H2O2. It functions in the pathway cofactor degradation; B6 vitamer degradation; pyridoxal from pyridoxine (oxidase route): step 1/1. The chain is Pyridoxine 4-oxidase (pno) from Microbacterium luteolum (Aureobacterium luteolum).